Consider the following 390-residue polypeptide: Homoserine O-acetyltransferase (390 aa).

The region spanning 55–366 (NAILINHAFS…ESDCGHDAFL (312 aa)) is the AB hydrolase-1 domain. Catalysis depends on Ser-163, which acts as the Nucleophile. Arg-232 is a binding site for substrate. Catalysis depends on residues Asp-329 and His-362. Asp-363 serves as a coordination point for substrate.

The protein belongs to the AB hydrolase superfamily. MetX family. In terms of assembly, homodimer.

The protein localises to the cytoplasm. The enzyme catalyses L-homoserine + acetyl-CoA = O-acetyl-L-homoserine + CoA. Its pathway is amino-acid biosynthesis; L-methionine biosynthesis via de novo pathway; O-acetyl-L-homoserine from L-homoserine: step 1/1. Transfers an acetyl group from acetyl-CoA to L-homoserine, forming acetyl-L-homoserine. In Desulfotalea psychrophila (strain LSv54 / DSM 12343), this protein is Homoserine O-acetyltransferase.